The chain runs to 395 residues: uncharacterized protein (395 aa).

The stretch at 288–318 (VAKGKEIDNAEIEKTIKEYENIEEGIEDIVK) forms a coiled coil.

This is an uncharacterized protein from Ostreid herpesvirus 1 (isolate France) (OsHV-1).